Reading from the N-terminus, the 396-residue chain is Elongation factor Tu (396 aa).

The region spanning 10-206 (KPHVNIGTIG…AVDAYIPEPE (197 aa)) is the tr-type G domain. The G1 stretch occupies residues 19 to 26 (GHVDHGKT). Residue 19-26 (GHVDHGKT) coordinates GTP. T26 contributes to the Mg(2+) binding site. Residues 60–64 (GITIA) are G2. The interval 81–84 (DCPG) is G3. GTP is bound by residues 81 to 85 (DCPGH) and 136 to 139 (NKAD). Residues 136 to 139 (NKAD) are G4. The G5 stretch occupies residues 174 to 176 (SAL).

The protein belongs to the TRAFAC class translation factor GTPase superfamily. Classic translation factor GTPase family. EF-Tu/EF-1A subfamily. As to quaternary structure, monomer.

Its subcellular location is the cytoplasm. It carries out the reaction GTP + H2O = GDP + phosphate + H(+). GTP hydrolase that promotes the GTP-dependent binding of aminoacyl-tRNA to the A-site of ribosomes during protein biosynthesis. This Geobacter metallireducens (strain ATCC 53774 / DSM 7210 / GS-15) protein is Elongation factor Tu.